The sequence spans 555 residues: Glutamine--tRNA ligase (555 aa).

The 'HIGH' region motif lies at 34 to 44 (PEPNGYLHIGH). ATP contacts are provided by residues 35–37 (EPN) and 41–47 (HIGHAKS). 2 residues coordinate L-glutamine: D67 and Y212. ATP is bound by residues T231, 261–262 (RL), and 269–271 (MSK). Positions 268-272 (IMSKR) match the 'KMSKS' region motif.

This sequence belongs to the class-I aminoacyl-tRNA synthetase family. Monomer.

The protein localises to the cytoplasm. It catalyses the reaction tRNA(Gln) + L-glutamine + ATP = L-glutaminyl-tRNA(Gln) + AMP + diphosphate. The chain is Glutamine--tRNA ligase from Yersinia pseudotuberculosis serotype O:1b (strain IP 31758).